The sequence spans 103 residues: Large ribosomal subunit protein bL21 (103 aa).

This sequence belongs to the bacterial ribosomal protein bL21 family. As to quaternary structure, part of the 50S ribosomal subunit. Contacts protein L20.

Functionally, this protein binds to 23S rRNA in the presence of protein L20. The sequence is that of Large ribosomal subunit protein bL21 from Yersinia enterocolitica serotype O:8 / biotype 1B (strain NCTC 13174 / 8081).